A 208-amino-acid chain; its full sequence is FMN-dependent NADH:quinone oxidoreductase (208 aa).

Residues 17-19 (SNS), 99-102 (MWNL), and 143-146 (SRGG) contribute to the FMN site.

It belongs to the azoreductase type 1 family. In terms of assembly, homodimer. FMN is required as a cofactor.

The catalysed reaction is 2 a quinone + NADH + H(+) = 2 a 1,4-benzosemiquinone + NAD(+). The enzyme catalyses N,N-dimethyl-1,4-phenylenediamine + anthranilate + 2 NAD(+) = 2-(4-dimethylaminophenyl)diazenylbenzoate + 2 NADH + 2 H(+). Functionally, quinone reductase that provides resistance to thiol-specific stress caused by electrophilic quinones. Its function is as follows. Also exhibits azoreductase activity. Catalyzes the reductive cleavage of the azo bond in aromatic azo compounds to the corresponding amines. The polypeptide is FMN-dependent NADH:quinone oxidoreductase (Staphylococcus aureus (strain COL)).